We begin with the raw amino-acid sequence, 365 residues long: Heat-inducible transcription repressor HrcA (365 aa).

Belongs to the HrcA family.

Its function is as follows. Negative regulator of class I heat shock genes (grpE-dnaK-dnaJ and groELS operons). Prevents heat-shock induction of these operons. The polypeptide is Heat-inducible transcription repressor HrcA (Nodularia spumigena).